The following is a 144-amino-acid chain: Large ribosomal subunit protein uL16 (144 aa).

Belongs to the universal ribosomal protein uL16 family. In terms of assembly, part of the 50S ribosomal subunit.

Its function is as follows. Binds 23S rRNA and is also seen to make contacts with the A and possibly P site tRNAs. This chain is Large ribosomal subunit protein uL16, found in Heliobacterium modesticaldum (strain ATCC 51547 / Ice1).